The chain runs to 144 residues: Large ribosomal subunit protein uL15 (144 aa).

The span at 1 to 18 (MRLNDLHPAEGSRPEGKR) shows a compositional bias: basic and acidic residues. Residues 1–58 (MRLNDLHPAEGSRPEGKRVGRGIGSGLGKTGGRGHKGQKSRSGGSVKPGFEGGQMPLQ) are disordered. The span at 21–31 (RGIGSGLGKTG) shows a compositional bias: gly residues.

This sequence belongs to the universal ribosomal protein uL15 family. Part of the 50S ribosomal subunit.

Binds to the 23S rRNA. This chain is Large ribosomal subunit protein uL15, found in Alcanivorax borkumensis (strain ATCC 700651 / DSM 11573 / NCIMB 13689 / SK2).